The sequence spans 100 residues: NADH-quinone oxidoreductase subunit K (100 aa).

The next 3 membrane-spanning stretches (helical) occupy residues 4–24, 28–48, and 60–80; these read LFHG…SLIV, ILFI…ALIV, and IMYI…LALL.

It belongs to the complex I subunit 4L family. In terms of assembly, NDH-1 is composed of 13 different subunits. Subunits NuoA, H, J, K, L, M, N constitute the membrane sector of the complex.

The protein localises to the cell membrane. It carries out the reaction a quinone + NADH + 5 H(+)(in) = a quinol + NAD(+) + 4 H(+)(out). NDH-1 shuttles electrons from NADH, via FMN and iron-sulfur (Fe-S) centers, to quinones in the respiratory chain. The immediate electron acceptor for the enzyme in this species is believed to be ubiquinone. Couples the redox reaction to proton translocation (for every two electrons transferred, four hydrogen ions are translocated across the cytoplasmic membrane), and thus conserves the redox energy in a proton gradient. This Buchnera aphidicola subsp. Acyrthosiphon pisum (strain 5A) protein is NADH-quinone oxidoreductase subunit K.